The sequence spans 150 residues: UPF0178 protein ASA_3749 (150 aa).

It belongs to the UPF0178 family.

This is UPF0178 protein ASA_3749 from Aeromonas salmonicida (strain A449).